Reading from the N-terminus, the 431-residue chain is MGAPRLIHVIRQIGALVVAAVTAAATINAYRPLARNGFASLWSWFIGLVVTEFPLPTLASQLGGLVLTAQRLTRPVRAVSWLVAAFSALGLLNLSRAGRQADAQLTAALDSGLGPDRRTASAGLWRRPAGGGTAKTPGPLRMLRIYRDYAHDGDISYGEYGRANHLDIWRRPDLDLTGTAPVLFQIPGGAWTTGNKRGQAHPLMSHLAELGWICVAINYRHSPRNTWPDHIIDVKRALAWVKAHISEYGGDPDFIAITGGSAGGHLSSLAALTPNDPRFQPGFEEADTRVQAAVPFYGVYDFTRLQDAMHPMMLPLLERMVVKQPRTANMQSYLDASPVTHISADAPPFFVLHGRNDSLVPVQQARGFVDQLRQVSKQPVVYAELPFTQHAFDLLGSARAAHTAIAVEQFLAEVYATQHAGSEPGPAVAIP.

3 helical membrane passes run 7–27 (IHVI…AATI), 38–58 (FASL…LPTL), and 75–95 (PVRA…LNLS). Catalysis depends on residues Ser-261, Asp-357, and His-390.

Belongs to the 'GDXG' lipolytic enzyme family.

It localises to the membrane. The polypeptide is Probable carboxylic ester hydrolase LipM (Mycobacterium tuberculosis (strain ATCC 25618 / H37Rv)).